Consider the following 295-residue polypeptide: 4-hydroxy-tetrahydrodipicolinate synthase (295 aa).

T47 is a binding site for pyruvate. The active-site Proton donor/acceptor is the Y135. K163 acts as the Schiff-base intermediate with substrate in catalysis. I204 is a pyruvate binding site.

Belongs to the DapA family. Homotetramer; dimer of dimers.

It is found in the cytoplasm. It catalyses the reaction L-aspartate 4-semialdehyde + pyruvate = (2S,4S)-4-hydroxy-2,3,4,5-tetrahydrodipicolinate + H2O + H(+). Its pathway is amino-acid biosynthesis; L-lysine biosynthesis via DAP pathway; (S)-tetrahydrodipicolinate from L-aspartate: step 3/4. Functionally, catalyzes the condensation of (S)-aspartate-beta-semialdehyde [(S)-ASA] and pyruvate to 4-hydroxy-tetrahydrodipicolinate (HTPA). This chain is 4-hydroxy-tetrahydrodipicolinate synthase, found in Caldicellulosiruptor saccharolyticus (strain ATCC 43494 / DSM 8903 / Tp8T 6331).